The chain runs to 160 residues: Ribosomal RNA large subunit methyltransferase H (160 aa).

Residues Leu-76 and Gly-108 each coordinate S-adenosyl-L-methionine.

The protein belongs to the RNA methyltransferase RlmH family. As to quaternary structure, homodimer.

Its subcellular location is the cytoplasm. It catalyses the reaction pseudouridine(1915) in 23S rRNA + S-adenosyl-L-methionine = N(3)-methylpseudouridine(1915) in 23S rRNA + S-adenosyl-L-homocysteine + H(+). Its function is as follows. Specifically methylates the pseudouridine at position 1915 (m3Psi1915) in 23S rRNA. The protein is Ribosomal RNA large subunit methyltransferase H of Rhodopseudomonas palustris (strain TIE-1).